The following is a 477-amino-acid chain: Bifunctional protein HldE (477 aa).

The interval 1-318 (MKVTLPEFER…ENAVRGRADT (318 aa)) is ribokinase. Lys-179 carries the post-translational modification N6-acetyllysine. ATP is bound at residue 195 to 198 (NLSE). Asp-264 is an active-site residue. Positions 344-477 (MTNGVFDILH…IKKIQQDKKG (134 aa)) are cytidylyltransferase.

The protein in the N-terminal section; belongs to the carbohydrate kinase PfkB family. This sequence in the C-terminal section; belongs to the cytidylyltransferase family. In terms of assembly, homodimer.

It catalyses the reaction D-glycero-beta-D-manno-heptose 7-phosphate + ATP = D-glycero-beta-D-manno-heptose 1,7-bisphosphate + ADP + H(+). It carries out the reaction D-glycero-beta-D-manno-heptose 1-phosphate + ATP + H(+) = ADP-D-glycero-beta-D-manno-heptose + diphosphate. The protein operates within nucleotide-sugar biosynthesis; ADP-L-glycero-beta-D-manno-heptose biosynthesis; ADP-L-glycero-beta-D-manno-heptose from D-glycero-beta-D-manno-heptose 7-phosphate: step 1/4. It participates in nucleotide-sugar biosynthesis; ADP-L-glycero-beta-D-manno-heptose biosynthesis; ADP-L-glycero-beta-D-manno-heptose from D-glycero-beta-D-manno-heptose 7-phosphate: step 3/4. Catalyzes the phosphorylation of D-glycero-D-manno-heptose 7-phosphate at the C-1 position to selectively form D-glycero-beta-D-manno-heptose-1,7-bisphosphate. In terms of biological role, catalyzes the ADP transfer from ATP to D-glycero-beta-D-manno-heptose 1-phosphate, yielding ADP-D-glycero-beta-D-manno-heptose. This chain is Bifunctional protein HldE, found in Escherichia fergusonii (strain ATCC 35469 / DSM 13698 / CCUG 18766 / IAM 14443 / JCM 21226 / LMG 7866 / NBRC 102419 / NCTC 12128 / CDC 0568-73).